A 333-amino-acid chain; its full sequence is Transmembrane protein I329L (333 aa).

The N-terminal stretch at 1–31 is a signal peptide; sequence MLRVFIFFVFLGSGLTGRIKPQITCKYFISE. Residues N32, N39, N44, N76, N82, and N101 are each glycosylated (N-linked (GlcNAc...) asparagine; by host). Over 32-239 the chain is Extracellular; the sequence is NNTWYKYNVT…NTERYKSCYP (208 aa). The LRR repeat unit spans residues 112–133; that stretch reads ELKFLDLRYNDLQVIEYNILRK. N-linked (GlcNAc...) asparagine; by host glycans are attached at residues N181, N185, and N219. A disulfide bridge links C195 with C237. The helical transmembrane segment at 240–260 threads the bilayer; sequence LVFISILCSCISFLFLFICLL. At 261-333 the chain is on the cytoplasmic side; it reads RSICKKYSCT…EKKVSCSRRK (73 aa).

The protein belongs to the asfivirus I329L family. Post-translationally, highly glycosylated.

The protein localises to the host endoplasmic reticulum membrane. The protein resides in the host Golgi apparatus membrane. Viral TLR3 homolog that probably prevents TLR3 dimerization and subsequent induction of IFN. Inhibits dsRNA-stimulated activation of NF-kB and IRF3. This chain is Transmembrane protein I329L, found in Ornithodoros (relapsing fever ticks).